We begin with the raw amino-acid sequence, 160 residues long: 6,7-dimethyl-8-ribityllumazine synthase (160 aa).

5-amino-6-(D-ribitylamino)uracil is bound by residues Trp-27, Ala-59 to Glu-61, and Val-81 to Ile-83. Gln-86–Thr-87 provides a ligand contact to (2S)-2-hydroxy-3-oxobutyl phosphate. His-89 serves as the catalytic Proton donor. Residue Asn-114 coordinates 5-amino-6-(D-ribitylamino)uracil. Arg-128 contributes to the (2S)-2-hydroxy-3-oxobutyl phosphate binding site.

Belongs to the DMRL synthase family. As to quaternary structure, homopentamer.

It carries out the reaction (2S)-2-hydroxy-3-oxobutyl phosphate + 5-amino-6-(D-ribitylamino)uracil = 6,7-dimethyl-8-(1-D-ribityl)lumazine + phosphate + 2 H2O + H(+). Its pathway is cofactor biosynthesis; riboflavin biosynthesis; riboflavin from 2-hydroxy-3-oxobutyl phosphate and 5-amino-6-(D-ribitylamino)uracil: step 1/2. In terms of biological role, catalyzes the formation of 6,7-dimethyl-8-ribityllumazine by condensation of 5-amino-6-(D-ribitylamino)uracil with 3,4-dihydroxy-2-butanone 4-phosphate. This is the penultimate step in the biosynthesis of riboflavin. The chain is 6,7-dimethyl-8-ribityllumazine synthase from Mycolicibacterium paratuberculosis (strain ATCC BAA-968 / K-10) (Mycobacterium paratuberculosis).